We begin with the raw amino-acid sequence, 953 residues long: Lysosomal alpha-glucosidase (953 aa).

A signal peptide spans 1 to 27 (MNIRKPLCSNSVVGACTLISLTTAVIL). Residues 28-69 (GHLMLRELMLLPQDLHESSSGLWKTYRPHHQEGYKPGPLHIQ) constitute a propeptide that is removed on maturation. A P-type domain is found at 80–131 (TQCDVPPSSRFDCAPDKGISQEQCEARGCCYVPAGQVLKEPQIGQPWCFFPP). 3 cysteine pairs are disulfide-bonded: Cys82–Cys109, Cys92–Cys108, and Cys103–Cys127. N-linked (GlcNAc...) asparagine glycans are attached at residues Asn140, Asn233, and Asn390. Residue Asp404 participates in substrate binding. A glycan (N-linked (GlcNAc...) asparagine) is linked at Asn470. Asp518 acts as the Nucleophile in catalysis. Residue Glu521 is part of the active site. Cys533 and Cys558 form a disulfide bridge. Substrate-binding residues include Arg600 and Asp616. An intrachain disulfide couples Cys647 to Cys658. Position 674 (His674) interacts with substrate. 3 N-linked (GlcNAc...) asparagine glycosylation sites follow: Asn883, Asn926, and Asn933.

This sequence belongs to the glycosyl hydrolase 31 family.

The protein resides in the lysosome. The protein localises to the lysosome membrane. The catalysed reaction is Hydrolysis of terminal, non-reducing (1-&gt;4)-linked alpha-D-glucose residues with release of alpha-D-glucose.. Functionally, essential for the degradation of glycogen in lysosomes. Has highest activity on alpha-1,4-linked glycosidic linkages, but can also hydrolyze alpha-1,6-linked glucans. This Mus musculus (Mouse) protein is Lysosomal alpha-glucosidase (Gaa).